The sequence spans 154 residues: Myoglobin (154 aa).

Residues 2–148 form the Globin domain; it reads GLSDGEWQIV…FRNDIAAKYK (147 aa). Position 4 is a phosphoserine (Ser4). His65 contacts nitrite. Position 65 (His65) interacts with O2. At Thr68 the chain carries Phosphothreonine. His94 contacts heme b.

Belongs to the globin family. In terms of assembly, monomeric.

It is found in the cytoplasm. Its subcellular location is the sarcoplasm. The catalysed reaction is Fe(III)-heme b-[protein] + nitric oxide + H2O = Fe(II)-heme b-[protein] + nitrite + 2 H(+). It catalyses the reaction H2O2 + AH2 = A + 2 H2O. In terms of biological role, monomeric heme protein which primary function is to store oxygen and facilitate its diffusion within muscle tissues. Reversibly binds oxygen through a pentacoordinated heme iron and enables its timely and efficient release as needed during periods of heightened demand. Depending on the oxidative conditions of tissues and cells, and in addition to its ability to bind oxygen, it also has a nitrite reductase activity whereby it regulates the production of bioactive nitric oxide. Under stress conditions, like hypoxia and anoxia, it also protects cells against reactive oxygen species thanks to its pseudoperoxidase activity. The sequence is that of Myoglobin (MB) from Lycaon pictus (African wild dog).